The chain runs to 359 residues: Carbamoyl phosphate synthase small chain (359 aa).

Positions 1 to 169 (MTKRILVLED…TKTSYPAPGV (169 aa)) are CPSase. Residues Ser46, Gly220, and Gly222 each contribute to the L-glutamine site. The region spanning 172-358 (SVVLVDFGLK…IEMMEVFKQS (187 aa)) is the Glutamine amidotransferase type-1 domain. The active-site Nucleophile is Cys247. The L-glutamine site is built by Met248, Gln251, Asn289, Gly291, and Tyr292. Catalysis depends on residues His331 and Asp333.

Belongs to the CarA family. Composed of two chains; the small (or glutamine) chain promotes the hydrolysis of glutamine to ammonia, which is used by the large (or ammonia) chain to synthesize carbamoyl phosphate. Tetramer of heterodimers (alpha,beta)4.

It carries out the reaction hydrogencarbonate + L-glutamine + 2 ATP + H2O = carbamoyl phosphate + L-glutamate + 2 ADP + phosphate + 2 H(+). It catalyses the reaction L-glutamine + H2O = L-glutamate + NH4(+). Its pathway is amino-acid biosynthesis; L-arginine biosynthesis; carbamoyl phosphate from bicarbonate: step 1/1. It functions in the pathway pyrimidine metabolism; UMP biosynthesis via de novo pathway; (S)-dihydroorotate from bicarbonate: step 1/3. Small subunit of the glutamine-dependent carbamoyl phosphate synthetase (CPSase). CPSase catalyzes the formation of carbamoyl phosphate from the ammonia moiety of glutamine, carbonate, and phosphate donated by ATP, constituting the first step of 2 biosynthetic pathways, one leading to arginine and/or urea and the other to pyrimidine nucleotides. The small subunit (glutamine amidotransferase) binds and cleaves glutamine to supply the large subunit with the substrate ammonia. The chain is Carbamoyl phosphate synthase small chain from Streptococcus pneumoniae (strain ATCC BAA-255 / R6).